The following is a 1120-amino-acid chain: DNA-directed RNA polymerase subunit beta (1120 aa).

It belongs to the RNA polymerase beta chain family. As to quaternary structure, in plastids the minimal PEP RNA polymerase catalytic core is composed of four subunits: alpha, beta, beta', and beta''. When a (nuclear-encoded) sigma factor is associated with the core the holoenzyme is formed, which can initiate transcription.

Its subcellular location is the plastid. The protein localises to the chloroplast. It catalyses the reaction RNA(n) + a ribonucleoside 5'-triphosphate = RNA(n+1) + diphosphate. Its function is as follows. DNA-dependent RNA polymerase catalyzes the transcription of DNA into RNA using the four ribonucleoside triphosphates as substrates. This Gracilaria tenuistipitata var. liui (Red alga) protein is DNA-directed RNA polymerase subunit beta.